Reading from the N-terminus, the 336-residue chain is NADH-quinone oxidoreductase subunit H (336 aa).

8 consecutive transmembrane segments (helical) span residues 12-32 (FLKI…LTWF), 84-104 (VVMA…GPGF), 118-138 (VNIA…GTIF), 156-176 (AAVV…VILL), 193-213 (GVWF…CMLA), 247-267 (LAEW…LFFG), 274-294 (IFGP…LVFF), and 313-333 (IAWK…AVVV).

The protein belongs to the complex I subunit 1 family. As to quaternary structure, NDH-1 is composed of 14 different subunits. Subunits NuoA, H, J, K, L, M, N constitute the membrane sector of the complex.

It is found in the cell inner membrane. The catalysed reaction is a quinone + NADH + 5 H(+)(in) = a quinol + NAD(+) + 4 H(+)(out). NDH-1 shuttles electrons from NADH, via FMN and iron-sulfur (Fe-S) centers, to quinones in the respiratory chain. The immediate electron acceptor for the enzyme in this species is believed to be ubiquinone. Couples the redox reaction to proton translocation (for every two electrons transferred, four hydrogen ions are translocated across the cytoplasmic membrane), and thus conserves the redox energy in a proton gradient. This subunit may bind ubiquinone. In Aquifex aeolicus (strain VF5), this protein is NADH-quinone oxidoreductase subunit H.